A 156-amino-acid polypeptide reads, in one-letter code: Acyl carrier protein, mitochondrial (156 aa).

The transit peptide at 1–68 directs the protein to the mitochondrion; it reads MASRVLCACV…GTVTHLCRQY (68 aa). Positions 77 to 152 constitute a Carrier domain; it reads DGIKDRVLYV…EIVDYIADKK (76 aa). An N6-acetyllysine modification is found at Lys-88. Ser-112 bears the O-(pantetheine 4'-phosphoryl)serine mark.

This sequence belongs to the acyl carrier protein (ACP) family. As to quaternary structure, mammalian complex I is composed of 45 different subunits. Interacts with ETFRF1. Identified in a complex composed of MALSU1, MIEF1 upstream open reading frame protein and NDUFAB1; within the trimeric complex, MIEF1 upstream open reading frame protein functions as a bridging scaffold that interacts with MALSU1 on one side, and with NDUFAB1 on the other side. The complex interacts with the mitochondrial large ribosomal subunit. Interacts with alpha-1-microglobulin chain; this interaction is required for the maintenance of mitochondrial redox homeostasis. Component of the mitochondrial core iron-sulfur cluster (ISC) complex composed of NFS1, LYRM4, NDUFAB1, ISCU, FXN, and FDX2; this complex is a heterohexamer containing two copies of each monomer. Component of the cyteine desulfurase complex composed of NFS1, LYRM4 and NDUFAB1; this complex contributes to the stability and cysteine desulfurase activity of NFS1. Phosphopantetheinylation at Ser-112 is essential for interactions with LYR motif-containing proteins.

Its subcellular location is the mitochondrion. Functionally, carrier of the growing fatty acid chain in fatty acid biosynthesis. Accessory and non-catalytic subunit of the mitochondrial membrane respiratory chain NADH dehydrogenase (Complex I), which functions in the transfer of electrons from NADH to the respiratory chain. Accessory protein, of the core iron-sulfur cluster (ISC) assembly complex, that regulates, in association with LYRM4, the stability and the cysteine desulfurase activity of NFS1 and participates in the [2Fe-2S] clusters assembly on the scaffolding protein ISCU. The core iron-sulfur cluster (ISC) assembly complex is involved in the de novo synthesis of a [2Fe-2S] cluster, the first step of the mitochondrial iron-sulfur protein biogenesis. This process is initiated by the cysteine desulfurase complex (NFS1:LYRM4:NDUFAB1) that produces persulfide which is delivered on the scaffold protein ISCU in a FXN-dependent manner. Then this complex is stabilized by FDX2 which provides reducing equivalents to accomplish the [2Fe-2S] cluster assembly. Finally, the [2Fe-2S] cluster is transferred from ISCU to chaperone proteins, including HSCB, HSPA9 and GLRX5. This Mus musculus (Mouse) protein is Acyl carrier protein, mitochondrial.